We begin with the raw amino-acid sequence, 539 residues long: Probable methionine--tRNA ligase, mitochondrial (539 aa).

The 'HIGH' region signature appears at 28-38 (FYVNAAPHLGH). The 'KMSKS' region signature appears at 326-330 (KMSKS). K329 contributes to the ATP binding site.

It belongs to the class-I aminoacyl-tRNA synthetase family.

The protein localises to the mitochondrion matrix. It carries out the reaction tRNA(Met) + L-methionine + ATP = L-methionyl-tRNA(Met) + AMP + diphosphate. This Schizosaccharomyces pombe (strain 972 / ATCC 24843) (Fission yeast) protein is Probable methionine--tRNA ligase, mitochondrial.